Consider the following 189-residue polypeptide: Cytidylate kinase (189 aa).

Residue 7-15 (GPPGSGKTS) participates in ATP binding.

Belongs to the cytidylate kinase family. Type 2 subfamily.

Its subcellular location is the cytoplasm. The enzyme catalyses CMP + ATP = CDP + ADP. It carries out the reaction dCMP + ATP = dCDP + ADP. The chain is Cytidylate kinase from Saccharolobus islandicus (strain L.S.2.15 / Lassen #1) (Sulfolobus islandicus).